The sequence spans 146 residues: Large ribosomal subunit protein uL13 (146 aa).

It belongs to the universal ribosomal protein uL13 family. As to quaternary structure, part of the 50S ribosomal subunit.

Functionally, this protein is one of the early assembly proteins of the 50S ribosomal subunit, although it is not seen to bind rRNA by itself. It is important during the early stages of 50S assembly. This Spiroplasma citri protein is Large ribosomal subunit protein uL13.